The primary structure comprises 193 residues: Interleukin-18 (193 aa).

A propeptide spanning residues 1-36 (MAAEPVEDNCINFVAMKFIDNTLYFIAEDDENLESD) is cleaved from the precursor.

The protein belongs to the IL-1 family. As to quaternary structure, forms a ternary complex with ligand-binding receptor subunit IL18R1 and signaling receptor subunit IL18RAP at the plasma membrane. Mature IL18 first binds to IL18R1 forming a low affinity binary complex, which then interacts with IL18RAP to form a high affinity ternary complex that signals inside the cell. Interacts with cargo receptor TMED10; the interaction mediates the translocation from the cytoplasm into the ERGIC (endoplasmic reticulum-Golgi intermediate compartment) and thereby secretion. Post-translationally, the pro-IL-18 precursor is processed by CASP1, CASP4 or CASP5 to yield its mature, active form. The pro-IL-18 precursor features autoinhibitory interactions between the propeptide and the post-cleavage-site region, preventing recognition by the IL18R1 receptor. Processing by CASP1, CASP4 or CASP5 induces conformational changes to generate critical receptor-binding sites. The mature form is then secreted and released in the extracellular milieu by passing through the gasdermin-D (GSDMD) pore. In contrast, cleavage by CASP3 inactivates IL18. As to expression, expressed in ovarian carcinoma but undetectable in normal ovarian epithelial cells. Resistant to proteolytic activation by caspase-1 and -4.

The protein localises to the cytoplasm. It localises to the cytosol. It is found in the secreted. Pro-inflammatory cytokine primarily involved in epithelial barrier repair, polarized T-helper 1 (Th1) cell and natural killer (NK) cell immune responses. Upon binding to IL18R1 and IL18RAP, forms a signaling ternary complex which activates NF-kappa-B, triggering synthesis of inflammatory mediators. Synergizes with IL12/interleukin-12 to induce IFNG synthesis from T-helper 1 (Th1) cells and natural killer (NK) cells. Involved in transduction of inflammation downstream of pyroptosis: its mature form is specifically released in the extracellular milieu by passing through the gasdermin-D (GSDMD) pore. This is Interleukin-18 from Homo sapiens (Human).